We begin with the raw amino-acid sequence, 209 residues long: Kynurenine formamidase (209 aa).

Residue phenylalanine 18 participates in substrate binding. Positions 48, 52, and 54 each coordinate Zn(2+). Histidine 58 serves as the catalytic Proton donor/acceptor. The Zn(2+) site is built by histidine 160 and glutamate 172.

Belongs to the Cyclase 1 superfamily. KynB family. As to quaternary structure, homodimer. The cofactor is Zn(2+).

The catalysed reaction is N-formyl-L-kynurenine + H2O = L-kynurenine + formate + H(+). It participates in amino-acid degradation; L-tryptophan degradation via kynurenine pathway; L-kynurenine from L-tryptophan: step 2/2. In terms of biological role, catalyzes the hydrolysis of N-formyl-L-kynurenine to L-kynurenine, the second step in the kynurenine pathway of tryptophan degradation. The protein is Kynurenine formamidase of Bordetella bronchiseptica (strain ATCC BAA-588 / NCTC 13252 / RB50) (Alcaligenes bronchisepticus).